Reading from the N-terminus, the 474-residue chain is Aspartyl/glutamyl-tRNA(Asn/Gln) amidotransferase subunit B (474 aa).

The protein belongs to the GatB/GatE family. GatB subfamily. As to quaternary structure, heterotrimer of A, B and C subunits.

It carries out the reaction L-glutamyl-tRNA(Gln) + L-glutamine + ATP + H2O = L-glutaminyl-tRNA(Gln) + L-glutamate + ADP + phosphate + H(+). It catalyses the reaction L-aspartyl-tRNA(Asn) + L-glutamine + ATP + H2O = L-asparaginyl-tRNA(Asn) + L-glutamate + ADP + phosphate + 2 H(+). In terms of biological role, allows the formation of correctly charged Asn-tRNA(Asn) or Gln-tRNA(Gln) through the transamidation of misacylated Asp-tRNA(Asn) or Glu-tRNA(Gln) in organisms which lack either or both of asparaginyl-tRNA or glutaminyl-tRNA synthetases. The reaction takes place in the presence of glutamine and ATP through an activated phospho-Asp-tRNA(Asn) or phospho-Glu-tRNA(Gln). In Persephonella marina (strain DSM 14350 / EX-H1), this protein is Aspartyl/glutamyl-tRNA(Asn/Gln) amidotransferase subunit B.